The chain runs to 473 residues: Photosystem II CP43 reaction center protein (473 aa).

Residues 1–14 constitute a propeptide that is removed on maturation; that stretch reads MKTLYSLRRFYHVE. An N-acetylthreonine modification is found at threonine 15. Threonine 15 is subject to Phosphothreonine. 5 consecutive transmembrane segments (helical) span residues 69–93, 134–155, 178–200, 255–275, and 291–312; these read LFEV…PHLA, LLGP…KDRN, KALY…RKIT, KPFA…LSYS, and WFNN…ASQA. Residue glutamate 367 coordinates [CaMn4O5] cluster. The chain crosses the membrane as a helical span at residues 447-471; it reads RARAAAAGFEKGIDRDFEPVLSMTP.

The protein belongs to the PsbB/PsbC family. PsbC subfamily. PSII is composed of 1 copy each of membrane proteins PsbA, PsbB, PsbC, PsbD, PsbE, PsbF, PsbH, PsbI, PsbJ, PsbK, PsbL, PsbM, PsbT, PsbX, PsbY, PsbZ, Psb30/Ycf12, at least 3 peripheral proteins of the oxygen-evolving complex and a large number of cofactors. It forms dimeric complexes. The cofactor is Binds multiple chlorophylls and provides some of the ligands for the Ca-4Mn-5O cluster of the oxygen-evolving complex. It may also provide a ligand for a Cl- that is required for oxygen evolution. PSII binds additional chlorophylls, carotenoids and specific lipids..

It is found in the plastid. It localises to the chloroplast thylakoid membrane. Its function is as follows. One of the components of the core complex of photosystem II (PSII). It binds chlorophyll and helps catalyze the primary light-induced photochemical processes of PSII. PSII is a light-driven water:plastoquinone oxidoreductase, using light energy to abstract electrons from H(2)O, generating O(2) and a proton gradient subsequently used for ATP formation. In Atropa belladonna (Belladonna), this protein is Photosystem II CP43 reaction center protein.